We begin with the raw amino-acid sequence, 455 residues long: Argininosuccinate synthase (455 aa).

Residues 17–25 (AFSGGLDTS) and Ala-43 each bind ATP. Tyr-99 serves as a coordination point for L-citrulline. Residues Gly-129 and Thr-131 each coordinate ATP. Residues Thr-131, Asn-135, and Asp-136 each coordinate L-aspartate. Residue Asn-135 coordinates L-citrulline. Asp-136 is a binding site for ATP. Positions 139 and 192 each coordinate L-citrulline. Position 194 (Asp-194) interacts with ATP. Residues Thr-201, Glu-203, and Glu-280 each coordinate L-citrulline. Residues 434-448 (TGLPQVDNNNLSSGR) are compositionally biased toward polar residues. The interval 434–455 (TGLPQVDNNNLSSGRGLQDKRQ) is disordered.

This sequence belongs to the argininosuccinate synthase family. Type 2 subfamily. Homotetramer.

The protein localises to the cytoplasm. It catalyses the reaction L-citrulline + L-aspartate + ATP = 2-(N(omega)-L-arginino)succinate + AMP + diphosphate + H(+). Its pathway is amino-acid biosynthesis; L-arginine biosynthesis; L-arginine from L-ornithine and carbamoyl phosphate: step 2/3. In Yersinia pestis, this protein is Argininosuccinate synthase (argG).